A 238-amino-acid chain; its full sequence is CS1 fimbrial subunit B (238 aa).

Residues 1–17 (MRKLFLSLLMIPFVAKA) form the signal peptide.

It is found in the fimbrium. In terms of biological role, might function as a shuttle protein in the transport of fimbria through the periplasmic space or might function as an adhesin. The protein is CS1 fimbrial subunit B (csoB) of Escherichia coli.